A 102-amino-acid chain; its full sequence is Alpha-hemoglobin-stabilizing protein (102 aa).

This sequence belongs to the AHSP family. Monomer. Forms a heterodimer with free alpha-hemoglobin. Does not bind beta-hemoglobin nor alpha(2)beta(2) hemoglobin A. As to expression, expressed in blood and bone marrow.

The protein localises to the cytoplasm. Acts as a chaperone to prevent the harmful aggregation of alpha-hemoglobin during normal erythroid cell development. Specifically protects free alpha-hemoglobin from precipitation. It is predicted to modulate pathological states of alpha-hemoglobin excess such as beta-thalassemia. This is Alpha-hemoglobin-stabilizing protein (AHSP) from Homo sapiens (Human).